Consider the following 430-residue polypeptide: uncharacterized protein (430 aa).

10 helical membrane-spanning segments follow: residues 13-33 (FFAA…FAFF), 47-67 (LAEL…GVVA), 88-108 (VVLF…ILFI), 138-158 (GLNQ…GAFM), 228-248 (LIFG…LPMF), 264-284 (SVFT…GTLI), 296-316 (IPIF…ILWV), 319-339 (AAAF…GGWM), 358-378 (FMMF…PKFV), and 383-403 (YLYY…FIAL).

Belongs to the major facilitator superfamily.

It localises to the cell membrane. This is an uncharacterized protein from Bacillus subtilis (strain 168).